Consider the following 432-residue polypeptide: Testis-specific Y-encoded-like protein 1 (432 aa).

Disordered stretches follow at residues 1–31 (MSGRDGGERTPLLEAHSLTTSDCAAGAPDPS), 54–110 (ALPP…LETA), and 116–135 (TDDSLGNGCQPGEPQGLSRE). Lys-160 is covalently cross-linked (Glycyl lysine isopeptide (Lys-Gly) (interchain with G-Cter in SUMO2)).

The protein belongs to the nucleosome assembly protein (NAP) family. Ubiquitinated by the CRL2(APPBP2) complex, which recognizes the Arg-Xaa-Xaa-Gly sequence at the C-terminus, leading to its degradation.

The protein resides in the nucleus. Its subcellular location is the nucleolus. The chain is Testis-specific Y-encoded-like protein 1 (TSPYL1) from Bos taurus (Bovine).